The following is a 693-amino-acid chain: DNA-directed RNA polymerase subunit beta' (693 aa).

Cysteine 76, cysteine 78, cysteine 94, and cysteine 97 together coordinate Zn(2+). Positions 496, 498, and 500 each coordinate Mg(2+).

This sequence belongs to the RNA polymerase beta' chain family. RpoC1 subfamily. In plastids the minimal PEP RNA polymerase catalytic core is composed of four subunits: alpha, beta, beta', and beta''. When a (nuclear-encoded) sigma factor is associated with the core the holoenzyme is formed, which can initiate transcription. The cofactor is Mg(2+). It depends on Zn(2+) as a cofactor.

It localises to the plastid. The protein resides in the chloroplast. It catalyses the reaction RNA(n) + a ribonucleoside 5'-triphosphate = RNA(n+1) + diphosphate. Its function is as follows. DNA-dependent RNA polymerase catalyzes the transcription of DNA into RNA using the four ribonucleoside triphosphates as substrates. This is DNA-directed RNA polymerase subunit beta' from Nuphar advena (Common spatterdock).